A 194-amino-acid polypeptide reads, in one-letter code: Ion-translocating oxidoreductase complex subunit A (194 aa).

Transmembrane regions (helical) follow at residues 4 to 24 (LALILVSAILVNNFVLVQFLG), 39 to 59 (IGLSLATTFVLTLAAICSYIL), 71 to 91 (FLRTIGFILVIAVVVQFTEML), 102 to 122 (VLGIFLPLITTNCIVLGVALL), 135 to 155 (TTQGFGAGLGFSLVLVLFAAL), and 172 to 192 (AIGMITAGLMSLAFMGFSGLI).

It belongs to the NqrDE/RnfAE family. As to quaternary structure, the complex is composed of six subunits: RnfA, RnfB, RnfC, RnfD, RnfE and RnfG.

It is found in the cell inner membrane. Its function is as follows. Part of a membrane-bound complex that couples electron transfer with translocation of ions across the membrane. This is Ion-translocating oxidoreductase complex subunit A from Pseudomonas paraeruginosa (strain DSM 24068 / PA7) (Pseudomonas aeruginosa (strain PA7)).